The chain runs to 199 residues: Imidazoleglycerol-phosphate dehydratase (199 aa).

It belongs to the imidazoleglycerol-phosphate dehydratase family.

The protein resides in the cytoplasm. It carries out the reaction D-erythro-1-(imidazol-4-yl)glycerol 3-phosphate = 3-(imidazol-4-yl)-2-oxopropyl phosphate + H2O. It functions in the pathway amino-acid biosynthesis; L-histidine biosynthesis; L-histidine from 5-phospho-alpha-D-ribose 1-diphosphate: step 6/9. The polypeptide is Imidazoleglycerol-phosphate dehydratase (Methylibium petroleiphilum (strain ATCC BAA-1232 / LMG 22953 / PM1)).